A 486-amino-acid polypeptide reads, in one-letter code: Adenosylhomocysteinase (486 aa).

The substrate site is built by Thr63, Asp147, and Glu209. Position 210–212 (210–212 (TTT)) interacts with NAD(+). Residues Lys239 and Asp243 each coordinate substrate. Residues Asn244, 273–278 (GYGDVG), Glu296, Asn331, 352–354 (IGH), and Asn400 each bind NAD(+).

Belongs to the adenosylhomocysteinase family. It depends on NAD(+) as a cofactor.

The catalysed reaction is S-adenosyl-L-homocysteine + H2O = L-homocysteine + adenosine. It functions in the pathway amino-acid biosynthesis; L-homocysteine biosynthesis; L-homocysteine from S-adenosyl-L-homocysteine: step 1/1. Functionally, adenosylhomocysteine is a competitive inhibitor of S-adenosyl-L-methionine-dependent methyl transferase reactions; therefore adenosylhomocysteinase may play a key role in the control of methylations via regulation of the intracellular concentration of adenosylhomocysteine. The sequence is that of Adenosylhomocysteinase from Trichomonas vaginalis.